Here is a 275-residue protein sequence, read N- to C-terminus: MLKIENLTKRYKGDEIALKGVSLEIKKGQVVGLIGPSGAGKSTLIRCINRLIEPSSGEVWLEGVNLPSLSRTKLKEARREMGMIFQEYALIERLSVMENVLSGRLGYHSFWRTFWRRFPEAEVERAFYYLERVGLIEHYNKRADQLSGGQRQRVGIARALAQEPKVLLVDEPTASLDPKTSRQVMRLLLELCREKELLAIVNIHDVPLAQAFMERIVGLRAGEVVFDGAPSELDERALTEIYGEEEWKTLQKTHQEESSLGEDSSLLYAKAEIAG.

The 245-residue stretch at 2–246 folds into the ABC transporter domain; it reads LKIENLTKRY…ALTEIYGEEE (245 aa). ATP is bound at residue 35–42; sequence GPSGAGKS.

Belongs to the ABC transporter superfamily. Phosphonates importer (TC 3.A.1.9.1) family. In terms of assembly, the complex is composed of two ATP-binding proteins (PhnC), two transmembrane proteins (PhnE) and a solute-binding protein (PhnD).

The protein resides in the cell inner membrane. The catalysed reaction is phosphonate(out) + ATP + H2O = phosphonate(in) + ADP + phosphate + H(+). Functionally, part of the ABC transporter complex PhnCDE involved in phosphonates import. Responsible for energy coupling to the transport system. In Wolinella succinogenes (strain ATCC 29543 / DSM 1740 / CCUG 13145 / JCM 31913 / LMG 7466 / NCTC 11488 / FDC 602W) (Vibrio succinogenes), this protein is Phosphonates import ATP-binding protein PhnC.